The following is a 382-amino-acid chain: ATP phosphoribosyltransferase regulatory subunit (382 aa).

This sequence belongs to the class-II aminoacyl-tRNA synthetase family. HisZ subfamily. As to quaternary structure, heteromultimer composed of HisG and HisZ subunits.

Its subcellular location is the cytoplasm. Its pathway is amino-acid biosynthesis; L-histidine biosynthesis; L-histidine from 5-phospho-alpha-D-ribose 1-diphosphate: step 1/9. Required for the first step of histidine biosynthesis. May allow the feedback regulation of ATP phosphoribosyltransferase activity by histidine. The polypeptide is ATP phosphoribosyltransferase regulatory subunit (Burkholderia lata (strain ATCC 17760 / DSM 23089 / LMG 22485 / NCIMB 9086 / R18194 / 383)).